A 630-amino-acid chain; its full sequence is Golgin subfamily A member 8K (630 aa).

Residues 1-76 are disordered; the sequence is MAEETQHNKL…TSSATLKDLE (76 aa). Coiled coils occupy residues 86-148 and 224-411; these read LDSR…LNTD and LTQL…QQNQ. Over residues 352–362 the composition is skewed to basic and acidic residues; that stretch reads KQEERIQEQHK. 2 disordered regions span residues 352–379 and 424–444; these read KQEE…EPNN and GEGH…PMPS.

The protein belongs to the GOLGA8 family.

This Homo sapiens (Human) protein is Golgin subfamily A member 8K.